The following is a 306-amino-acid chain: UDP-3-O-acyl-N-acetylglucosamine deacetylase (306 aa).

Residues H79, H239, and D243 each contribute to the Zn(2+) site. The active-site Proton donor is the H266.

Belongs to the LpxC family. Zn(2+) serves as cofactor.

It carries out the reaction a UDP-3-O-[(3R)-3-hydroxyacyl]-N-acetyl-alpha-D-glucosamine + H2O = a UDP-3-O-[(3R)-3-hydroxyacyl]-alpha-D-glucosamine + acetate. Its pathway is glycolipid biosynthesis; lipid IV(A) biosynthesis; lipid IV(A) from (3R)-3-hydroxytetradecanoyl-[acyl-carrier-protein] and UDP-N-acetyl-alpha-D-glucosamine: step 2/6. In terms of biological role, catalyzes the hydrolysis of UDP-3-O-myristoyl-N-acetylglucosamine to form UDP-3-O-myristoylglucosamine and acetate, the committed step in lipid A biosynthesis. The polypeptide is UDP-3-O-acyl-N-acetylglucosamine deacetylase (Haemophilus ducreyi (strain 35000HP / ATCC 700724)).